The following is a 220-amino-acid chain: Deoxyribose-phosphate aldolase (220 aa).

Asp-92 (proton donor/acceptor) is an active-site residue. Catalysis depends on Lys-157, which acts as the Schiff-base intermediate with acetaldehyde. Lys-186 acts as the Proton donor/acceptor in catalysis.

The protein belongs to the DeoC/FbaB aldolase family. DeoC type 1 subfamily.

It is found in the cytoplasm. The catalysed reaction is 2-deoxy-D-ribose 5-phosphate = D-glyceraldehyde 3-phosphate + acetaldehyde. It functions in the pathway carbohydrate degradation; 2-deoxy-D-ribose 1-phosphate degradation; D-glyceraldehyde 3-phosphate and acetaldehyde from 2-deoxy-alpha-D-ribose 1-phosphate: step 2/2. Catalyzes a reversible aldol reaction between acetaldehyde and D-glyceraldehyde 3-phosphate to generate 2-deoxy-D-ribose 5-phosphate. The protein is Deoxyribose-phosphate aldolase of Caldicellulosiruptor saccharolyticus (strain ATCC 43494 / DSM 8903 / Tp8T 6331).